The primary structure comprises 68 residues: Translational regulator CsrA 1 (68 aa).

The protein belongs to the CsrA/RsmA family. In terms of assembly, homodimer; the beta-strands of each monomer intercalate to form a hydrophobic core, while the alpha-helices form wings that extend away from the core.

The protein resides in the cytoplasm. In terms of biological role, a key translational regulator that binds mRNA to regulate translation initiation and/or mRNA stability. Mediates global changes in gene expression, shifting from rapid growth to stress survival by linking envelope stress, the stringent response and the catabolite repression systems. Usually binds in the 5'-UTR; binding at or near the Shine-Dalgarno sequence prevents ribosome-binding, repressing translation, binding elsewhere in the 5'-UTR can activate translation and/or stabilize the mRNA. Its function is antagonized by small RNA(s). The sequence is that of Translational regulator CsrA 1 from Coxiella burnetii (strain RSA 493 / Nine Mile phase I).